The sequence spans 180 residues: Acireductone dioxygenase (180 aa).

Positions 97, 99, 103, and 141 each coordinate Fe(2+). The Ni(2+) site is built by His-97, His-99, Glu-103, and His-141.

This sequence belongs to the acireductone dioxygenase (ARD) family. Monomer. It depends on Fe(2+) as a cofactor. The cofactor is Ni(2+).

It carries out the reaction 1,2-dihydroxy-5-(methylsulfanyl)pent-1-en-3-one + O2 = 3-(methylsulfanyl)propanoate + CO + formate + 2 H(+). The catalysed reaction is 1,2-dihydroxy-5-(methylsulfanyl)pent-1-en-3-one + O2 = 4-methylsulfanyl-2-oxobutanoate + formate + 2 H(+). It functions in the pathway amino-acid biosynthesis; L-methionine biosynthesis via salvage pathway; L-methionine from S-methyl-5-thio-alpha-D-ribose 1-phosphate: step 5/6. Its function is as follows. Catalyzes 2 different reactions between oxygen and the acireductone 1,2-dihydroxy-3-keto-5-methylthiopentene (DHK-MTPene) depending upon the metal bound in the active site. Fe-containing acireductone dioxygenase (Fe-ARD) produces formate and 2-keto-4-methylthiobutyrate (KMTB), the alpha-ketoacid precursor of methionine in the methionine recycle pathway. Ni-containing acireductone dioxygenase (Ni-ARD) produces methylthiopropionate, carbon monoxide and formate, and does not lie on the methionine recycle pathway. The chain is Acireductone dioxygenase from Citrobacter koseri (strain ATCC BAA-895 / CDC 4225-83 / SGSC4696).